The sequence spans 609 residues: Beta-(1--&gt;2)glucan export ATP-binding/permease protein NdvA (609 aa).

The ABC transmembrane type-1 domain maps to 21–311; that stretch reads GWILAGANLL…VVSFINSVFM (291 aa). A run of 6 helical transmembrane segments spans residues 22–42, 68–88, 146–166, 167–187, 248–268, and 285–305; these read WILA…PVLF, LLAV…TVAL, EHFA…YINW, RLAI…TLVV, WWAV…LAIF, and IVMF…VVSF. In terms of domain architecture, ABC transporter spans 345-579; the sequence is VEFNDVSFSY…GGHFAQLAKA (235 aa). Residue 378 to 385 participates in ATP binding; that stretch reads GPTGAGKS.

Belongs to the ABC transporter superfamily. Beta-(1--&gt;2)glucan exporter (TC 3.A.1.108.1) family. Homodimer.

The protein resides in the cell inner membrane. It carries out the reaction [(1-&gt;2)-beta-D-glucosyl](n)(in) + ATP + H2O = [(1-&gt;2)-beta-D-glucosyl](n)(out) + ADP + phosphate + H(+). Involved in beta-(1--&gt;2)glucan export. Transmembrane domains (TMD) form a pore in the inner membrane and the ATP-binding domain (NBD) is responsible for energy generation. The protein is Beta-(1--&gt;2)glucan export ATP-binding/permease protein NdvA of Nitrobacter winogradskyi (strain ATCC 25391 / DSM 10237 / CIP 104748 / NCIMB 11846 / Nb-255).